A 693-amino-acid chain; its full sequence is Cleavage and polyadenylation specificity factor subunit 3-I (693 aa).

The HXHXDH motif motif lies at 81-86 (HFHIDH).

The protein belongs to the metallo-beta-lactamase superfamily. RNA-metabolizing metallo-beta-lactamase-like family. INTS11 subfamily. As to quaternary structure, component of the CPSF complex, at least composed of CPSF160, CPSF100, CPSF73-I, CPSF73-II, CPSF30, FY and FIPS5. Interacts with CLPS3, CPSF100, CPSF160 and FY. Highly expressed in carpels. Also detected in seedlings, roots, stems, leaves, flowers and siliques.

The protein resides in the nucleus. In terms of biological role, component of the cleavage and polyadenylation specificity factor (CPSF) complex that play a key role in pre-mRNA 3'-end formation, recognizing the AAUAAA signal sequence and interacting with poly(A) polymerase and other factors to bring about cleavage and poly(A) addition. May function as mRNA 3'-end-processing endonuclease and also be involved in the histone 3'-end pre-mRNA processing. The polypeptide is Cleavage and polyadenylation specificity factor subunit 3-I (CPSF73-I) (Arabidopsis thaliana (Mouse-ear cress)).